Here is a 255-residue protein sequence, read N- to C-terminus: ParA family protein CPn_0805/CP_1066/CPj0805/CpB0834 (255 aa).

It belongs to the ParA family.

In Chlamydia pneumoniae (Chlamydophila pneumoniae), this protein is ParA family protein CPn_0805/CP_1066/CPj0805/CpB0834.